Here is a 310-residue protein sequence, read N- to C-terminus: tRNA dimethylallyltransferase (310 aa).

Residue 14-21 (GPTASGKT) participates in ATP binding. Residue 16–21 (TASGKT) coordinates substrate. Interaction with substrate tRNA regions lie at residues 39–42 (DSAL), 163–167 (QRLSR), and 244–249 (RCVGYR).

This sequence belongs to the IPP transferase family. As to quaternary structure, monomer. The cofactor is Mg(2+).

The enzyme catalyses adenosine(37) in tRNA + dimethylallyl diphosphate = N(6)-dimethylallyladenosine(37) in tRNA + diphosphate. In terms of biological role, catalyzes the transfer of a dimethylallyl group onto the adenine at position 37 in tRNAs that read codons beginning with uridine, leading to the formation of N6-(dimethylallyl)adenosine (i(6)A). The polypeptide is tRNA dimethylallyltransferase (Tolumonas auensis (strain DSM 9187 / NBRC 110442 / TA 4)).